A 108-amino-acid polypeptide reads, in one-letter code: MITPAAYVGAAIAEIAGCFAFWAWLRLGKSVWWLVPGMASLALFAYLLTLVDSEAAGRAYAAYGGIYIMASLGWLWSVEGIEPDRWDLAGALICLIGAVVILIGPHEI.

A run of 4 helical transmembrane segments spans residues 5–25, 31–51, 61–81, and 88–108; these read AAYVGAAIAEIAGCFAFWAWL, VWWLVPGMASLALFAYLLTLV, AAYGGIYIMASLGWLWSVEGI, and LAGALICLIGAVVILIGPHEI.

It belongs to the UPF0060 family.

It is found in the cell inner membrane. This is UPF0060 membrane protein Nwi_1459 from Nitrobacter winogradskyi (strain ATCC 25391 / DSM 10237 / CIP 104748 / NCIMB 11846 / Nb-255).